We begin with the raw amino-acid sequence, 376 residues long: RING-H2 finger protein ATL46 (376 aa).

A helical membrane pass occupies residues 45 to 65 (VLFVIVILAVLFFISGLLHLL). Residues 143-185 (CAVCLCEFSEKDKLRLLPMCSHAFHLNCIDTWLQSNSTCPLCR) form an RING-type; atypical zinc finger. 2 stretches are compositionally biased toward basic and acidic residues: residues 296–305 (RLKPQDKESE) and 358–376 (DLPK…NDGR). 2 disordered regions span residues 296-320 (RLKP…KINT) and 341-376 (FSSD…NDGR).

It belongs to the RING-type zinc finger family. ATL subfamily.

It localises to the membrane. It catalyses the reaction S-ubiquitinyl-[E2 ubiquitin-conjugating enzyme]-L-cysteine + [acceptor protein]-L-lysine = [E2 ubiquitin-conjugating enzyme]-L-cysteine + N(6)-ubiquitinyl-[acceptor protein]-L-lysine.. The protein operates within protein modification; protein ubiquitination. In Arabidopsis thaliana (Mouse-ear cress), this protein is RING-H2 finger protein ATL46 (ATL46).